The following is a 280-amino-acid chain: Diaminopimelate epimerase (280 aa).

Substrate-binding residues include N11 and N62. The Proton donor role is filled by C71. Substrate-binding positions include 72–73 (GN), N160, N193, and 211–212 (ER). Catalysis depends on C220, which acts as the Proton acceptor. 221–222 (GT) is a binding site for substrate.

It belongs to the diaminopimelate epimerase family. Homodimer.

Its subcellular location is the cytoplasm. The enzyme catalyses (2S,6S)-2,6-diaminopimelate = meso-2,6-diaminopimelate. It participates in amino-acid biosynthesis; L-lysine biosynthesis via DAP pathway; DL-2,6-diaminopimelate from LL-2,6-diaminopimelate: step 1/1. Functionally, catalyzes the stereoinversion of LL-2,6-diaminopimelate (L,L-DAP) to meso-diaminopimelate (meso-DAP), a precursor of L-lysine and an essential component of the bacterial peptidoglycan. In Acetivibrio thermocellus (strain ATCC 27405 / DSM 1237 / JCM 9322 / NBRC 103400 / NCIMB 10682 / NRRL B-4536 / VPI 7372) (Clostridium thermocellum), this protein is Diaminopimelate epimerase.